The chain runs to 51 residues: Large ribosomal subunit protein bL33 (51 aa).

This sequence belongs to the bacterial ribosomal protein bL33 family.

The polypeptide is Large ribosomal subunit protein bL33 (Acidithiobacillus ferrooxidans (strain ATCC 53993 / BNL-5-31) (Leptospirillum ferrooxidans (ATCC 53993))).